The following is a 691-amino-acid chain: Pleckstrin homology domain-containing family G member 7 (691 aa).

Disordered regions lie at residues 1–48 (MEKT…ISTS) and 109–140 (TSEP…LQPV). The 176-residue stretch at 313-488 (MIFMNTLRYL…EGKVKWLDNF (176 aa)) folds into the DH domain. A glycan (N-linked (GlcNAc...) asparagine) is linked at asparagine 395. Residues 535–668 (HLLYEGKLTL…WMAQITTAIS (134 aa)) enclose the PH domain.

The protein is Pleckstrin homology domain-containing family G member 7 of Homo sapiens (Human).